A 241-amino-acid chain; its full sequence is tRNA pseudouridine synthase A (241 aa).

D51 acts as the Nucleophile in catalysis. A substrate-binding site is contributed by Y110.

Belongs to the tRNA pseudouridine synthase TruA family. In terms of assembly, homodimer.

The enzyme catalyses uridine(38/39/40) in tRNA = pseudouridine(38/39/40) in tRNA. In terms of biological role, formation of pseudouridine at positions 38, 39 and 40 in the anticodon stem and loop of transfer RNAs. This Campylobacter jejuni subsp. doylei (strain ATCC BAA-1458 / RM4099 / 269.97) protein is tRNA pseudouridine synthase A.